The following is a 350-amino-acid chain: MALLAITALAGMDLAQWQALLNNVAFAISLGAMLFYWGGAAFPQMQLLAELGLAGMIGANLTMAALLTARWIDAGYFPLSNLYESLFFLAWGITALHLLALHWSRSRWVGVMTAPVVTGIVAFAALVLPEDMQVAQPLVPALQSNWLMMHVTVMLLAYAALLVGSLLSISFLIVTRGQEVHLKGNSLGLQFRPPQPQTHPEWAEATLPSPASELAYAGLRSPRPAPSSAELPPQPAPEGIPWQRLSLAEILDNTSYRLIGLGFPLLTIGIIAGAVWANEAWGTYWSWDPKETWALITWLVFAAYLHARITKGWQGRRPALLASLGFGVVWVCYLGVNFLGKGLHSYGWFF.

Helical transmembrane passes span 23–43 (NVAF…AAFP), 47–67 (LLAE…AALL), 82–102 (LYES…LALH), 108–128 (WVGV…ALVL), 153–173 (VMLL…SFLI), 258–278 (LIGL…VWAN), 293–313 (WALI…TKGW), and 319–339 (ALLA…VNFL).

Belongs to the CcmF/CycK/Ccl1/NrfE/CcsA family. May interact with ccs1.

Its subcellular location is the cellular thylakoid membrane. Its function is as follows. Required during biogenesis of c-type cytochromes (cytochrome c6 and cytochrome f) at the step of heme attachment. The chain is Cytochrome c biogenesis protein CcsA from Synechococcus sp. (strain JA-2-3B'a(2-13)) (Cyanobacteria bacterium Yellowstone B-Prime).